The primary structure comprises 245 residues: 1-(5-phosphoribosyl)-5-[(5-phosphoribosylamino)methylideneamino] imidazole-4-carboxamide isomerase (245 aa).

The Proton acceptor role is filled by Asp-7. Asp-129 serves as the catalytic Proton donor.

Belongs to the HisA/HisF family.

Its subcellular location is the cytoplasm. The catalysed reaction is 1-(5-phospho-beta-D-ribosyl)-5-[(5-phospho-beta-D-ribosylamino)methylideneamino]imidazole-4-carboxamide = 5-[(5-phospho-1-deoxy-D-ribulos-1-ylimino)methylamino]-1-(5-phospho-beta-D-ribosyl)imidazole-4-carboxamide. It functions in the pathway amino-acid biosynthesis; L-histidine biosynthesis; L-histidine from 5-phospho-alpha-D-ribose 1-diphosphate: step 4/9. The chain is 1-(5-phosphoribosyl)-5-[(5-phosphoribosylamino)methylideneamino] imidazole-4-carboxamide isomerase from Shewanella sp. (strain W3-18-1).